A 312-amino-acid polypeptide reads, in one-letter code: Malate dehydrogenase (312 aa).

Residues 12 to 17 (GAGFTG) and Asp36 each bind NAD(+). Arg87 and Arg93 together coordinate substrate. NAD(+) is bound by residues Asn100 and 123 to 125 (LTN). Asn125 contributes to the substrate binding site. Ser149 carries the post-translational modification Phosphoserine. Residue Arg156 participates in substrate binding. The Proton acceptor role is filled by His180.

The protein belongs to the LDH/MDH superfamily. MDH type 3 family.

It carries out the reaction (S)-malate + NAD(+) = oxaloacetate + NADH + H(+). Catalyzes the reversible oxidation of malate to oxaloacetate. In Geobacillus thermodenitrificans, this protein is Malate dehydrogenase.